A 153-amino-acid polypeptide reads, in one-letter code: Aspartate carbamoyltransferase regulatory chain (153 aa).

Positions 109, 114, 135, and 138 each coordinate Zn(2+).

Belongs to the PyrI family. As to quaternary structure, contains catalytic and regulatory chains. It depends on Zn(2+) as a cofactor.

Its function is as follows. Involved in allosteric regulation of aspartate carbamoyltransferase. This is Aspartate carbamoyltransferase regulatory chain from Natronomonas pharaonis (strain ATCC 35678 / DSM 2160 / CIP 103997 / JCM 8858 / NBRC 14720 / NCIMB 2260 / Gabara) (Halobacterium pharaonis).